We begin with the raw amino-acid sequence, 546 residues long: 2-succinyl-5-enolpyruvyl-6-hydroxy-3-cyclohexene-1-carboxylate synthase (546 aa).

Belongs to the TPP enzyme family. MenD subfamily. As to quaternary structure, homodimer. Requires Mg(2+) as cofactor. Mn(2+) serves as cofactor. The cofactor is thiamine diphosphate.

It carries out the reaction isochorismate + 2-oxoglutarate + H(+) = 5-enolpyruvoyl-6-hydroxy-2-succinyl-cyclohex-3-ene-1-carboxylate + CO2. It functions in the pathway quinol/quinone metabolism; 1,4-dihydroxy-2-naphthoate biosynthesis; 1,4-dihydroxy-2-naphthoate from chorismate: step 2/7. The protein operates within quinol/quinone metabolism; menaquinone biosynthesis. Its function is as follows. Catalyzes the thiamine diphosphate-dependent decarboxylation of 2-oxoglutarate and the subsequent addition of the resulting succinic semialdehyde-thiamine pyrophosphate anion to isochorismate to yield 2-succinyl-5-enolpyruvyl-6-hydroxy-3-cyclohexene-1-carboxylate (SEPHCHC). The protein is 2-succinyl-5-enolpyruvyl-6-hydroxy-3-cyclohexene-1-carboxylate synthase of Mycolicibacterium smegmatis (strain ATCC 700084 / mc(2)155) (Mycobacterium smegmatis).